The following is a 355-amino-acid chain: Hydroxylysine kinase (355 aa).

Asp-215 (proton acceptor) is an active-site residue.

The protein belongs to the aminoglycoside phosphotransferase family.

It localises to the cytoplasm. The catalysed reaction is (5R)-5-hydroxy-L-lysine + GTP = (5R)-5-phosphooxy-L-lysine + GDP + H(+). In terms of biological role, catalyzes the GTP-dependent phosphorylation of 5-hydroxy-L-lysine. This Danio rerio (Zebrafish) protein is Hydroxylysine kinase (hykk).